The sequence spans 208 residues: UPF0637 protein lp_2332 (208 aa).

Belongs to the UPF0637 family.

The sequence is that of UPF0637 protein lp_2332 from Lactiplantibacillus plantarum (strain ATCC BAA-793 / NCIMB 8826 / WCFS1) (Lactobacillus plantarum).